Reading from the N-terminus, the 505-residue chain is Lysine--tRNA ligase (505 aa).

Residues glutamate 415 and glutamate 422 each contribute to the Mg(2+) site.

The protein belongs to the class-II aminoacyl-tRNA synthetase family. As to quaternary structure, homodimer. Mg(2+) serves as cofactor.

It is found in the cytoplasm. It carries out the reaction tRNA(Lys) + L-lysine + ATP = L-lysyl-tRNA(Lys) + AMP + diphosphate. This Shigella boydii serotype 4 (strain Sb227) protein is Lysine--tRNA ligase.